We begin with the raw amino-acid sequence, 240 residues long: Protein GUCD1 (240 aa).

In Homo sapiens (Human), this protein is Protein GUCD1 (GUCD1).